The sequence spans 365 residues: Growth-regulating factor 7 (365 aa).

The region spanning 59-94 (PFTNAQLKELERQAMIYKYMIASIPVPFDLLVSSPS) is the QLQ domain. In terms of domain architecture, WRC spans 107-151 (DLEPGRCRRTDGKKWRCAKEVVSNHKYCEKHLHRGRPRSRKHVEP). Short sequence motifs (bipartite nuclear localization signal) lie at residues 112 to 122 (RCRRTDGKKWR) and 140 to 147 (RGRPRSRK). Positions 137-147 (HLHRGRPRSRK) are enriched in basic residues. 2 disordered regions span residues 137–187 (HLHR…TLEP) and 332–365 (IESYSLMETPTPSSSPSRVMKKMTSSVSDESSQV). Residues 337-365 (LMETPTPSSSPSRVMKKMTSSVSDESSQV) show a composition bias toward polar residues.

Belongs to the GRF family.

The protein resides in the nucleus. In terms of biological role, transcription activator that plays a role in the regulation of cell expansion in leaf and cotyledons tissues. Component of a network formed by miR396, the GRFs and their interacting factors (GIFs) acting in the regulation of meristem function, at least partially through the control of cell proliferation. This is Growth-regulating factor 7 (GRF7) from Arabidopsis thaliana (Mouse-ear cress).